We begin with the raw amino-acid sequence, 342 residues long: Dihydroorotate dehydrogenase (quinone) (342 aa).

FMN contacts are provided by residues 61–65 (AGLDK) and threonine 85. Residue lysine 65 participates in substrate binding. 110-114 (NRMGF) is a substrate binding site. 2 residues coordinate FMN: asparagine 138 and asparagine 171. Asparagine 171 provides a ligand contact to substrate. The Nucleophile role is filled by serine 174. Asparagine 176 serves as a coordination point for substrate. Lysine 216 and threonine 244 together coordinate FMN. 245–246 (NT) lines the substrate pocket. Residues glycine 267, glycine 296, and 317-318 (YS) contribute to the FMN site.

Belongs to the dihydroorotate dehydrogenase family. Type 2 subfamily. Monomer. FMN is required as a cofactor.

The protein localises to the cell membrane. The catalysed reaction is (S)-dihydroorotate + a quinone = orotate + a quinol. It participates in pyrimidine metabolism; UMP biosynthesis via de novo pathway; orotate from (S)-dihydroorotate (quinone route): step 1/1. Its function is as follows. Catalyzes the conversion of dihydroorotate to orotate with quinone as electron acceptor. The polypeptide is Dihydroorotate dehydrogenase (quinone) (Pseudomonas aeruginosa (strain UCBPP-PA14)).